Reading from the N-terminus, the 158-residue chain is NAD(P)H-quinone oxidoreductase subunit J, chloroplastic (158 aa).

Belongs to the complex I 30 kDa subunit family. In terms of assembly, NDH is composed of at least 16 different subunits, 5 of which are encoded in the nucleus.

It localises to the plastid. The protein resides in the chloroplast thylakoid membrane. It carries out the reaction a plastoquinone + NADH + (n+1) H(+)(in) = a plastoquinol + NAD(+) + n H(+)(out). It catalyses the reaction a plastoquinone + NADPH + (n+1) H(+)(in) = a plastoquinol + NADP(+) + n H(+)(out). In terms of biological role, NDH shuttles electrons from NAD(P)H:plastoquinone, via FMN and iron-sulfur (Fe-S) centers, to quinones in the photosynthetic chain and possibly in a chloroplast respiratory chain. The immediate electron acceptor for the enzyme in this species is believed to be plastoquinone. Couples the redox reaction to proton translocation, and thus conserves the redox energy in a proton gradient. In Trachelium caeruleum (Blue throatwort), this protein is NAD(P)H-quinone oxidoreductase subunit J, chloroplastic.